The sequence spans 298 residues: 2-dehydro-3-deoxy-D-arabinonate dehydratase (298 aa).

I86 lines the substrate pocket. Residues E148, E150, and D169 each coordinate Mg(2+). Substrate is bound by residues K187 and T261.

It belongs to the FAH family. Homotetramer. Mg(2+) is required as a cofactor. Requires Ca(2+) as cofactor.

It carries out the reaction 2-dehydro-3-deoxy-D-arabinonate = 2,5-dioxopentanoate + H2O. In terms of biological role, participates in a pentose oxidation pathway that converts D-arabinonate to 2-oxoglutarate. The chain is 2-dehydro-3-deoxy-D-arabinonate dehydratase from Saccharolobus solfataricus (strain ATCC 35092 / DSM 1617 / JCM 11322 / P2) (Sulfolobus solfataricus).